A 381-amino-acid polypeptide reads, in one-letter code: Chaperone protein DnaJ (381 aa).

A J domain is found at 3-66; the sequence is DYYETLGVER…DKRRMYDSGV (64 aa). A CR-type zinc finger spans residues 129–211; the sequence is GGTAHVKINT…CMGHGRVRTT (83 aa). Zn(2+) is bound by residues C142, C145, C159, C162, C185, C188, C199, and C202. 4 CXXCXGXG motif repeats span residues 142–149, 159–166, 185–192, and 199–206; these read CQECGGSG, CPDCHGQG, CERCEGHG, and CPSCMGHG. Positions 355–381 are disordered; the sequence is ATHVSQASRPQAGQKKGFFSKLKDALS. A compositionally biased stretch (polar residues) spans 356-365; the sequence is THVSQASRPQ.

This sequence belongs to the DnaJ family. Homodimer. Zn(2+) serves as cofactor.

The protein localises to the cytoplasm. Its function is as follows. Participates actively in the response to hyperosmotic and heat shock by preventing the aggregation of stress-denatured proteins and by disaggregating proteins, also in an autonomous, DnaK-independent fashion. Unfolded proteins bind initially to DnaJ; upon interaction with the DnaJ-bound protein, DnaK hydrolyzes its bound ATP, resulting in the formation of a stable complex. GrpE releases ADP from DnaK; ATP binding to DnaK triggers the release of the substrate protein, thus completing the reaction cycle. Several rounds of ATP-dependent interactions between DnaJ, DnaK and GrpE are required for fully efficient folding. Also involved, together with DnaK and GrpE, in the DNA replication of plasmids through activation of initiation proteins. The chain is Chaperone protein DnaJ from Bifidobacterium longum (strain NCC 2705).